We begin with the raw amino-acid sequence, 370 residues long: Ferrochelatase (370 aa).

Residues H210 and E291 each coordinate Fe cation.

The protein belongs to the ferrochelatase family.

It is found in the cytoplasm. The catalysed reaction is heme b + 2 H(+) = protoporphyrin IX + Fe(2+). The protein operates within porphyrin-containing compound metabolism; protoheme biosynthesis; protoheme from protoporphyrin-IX: step 1/1. In terms of biological role, catalyzes the ferrous insertion into protoporphyrin IX. In Marinobacter nauticus (strain ATCC 700491 / DSM 11845 / VT8) (Marinobacter aquaeolei), this protein is Ferrochelatase.